The following is a 515-amino-acid chain: WUSCHEL-related homeobox 12 (515 aa).

Composition is skewed to polar residues over residues 23-32 and 44-57; these read QQQPDMNGNG and TAATTGNGKPSLLS. Disordered stretches follow at residues 23-76, 130-156, and 176-195; these read QQQP…WNPR, NKLRAAGHHHHHGRAAALPRASAPPST, and LLAATSSSSSSSDRSSGSSK. The segment covering 62–71 has biased composition (basic and acidic residues); it reads EGTRNPEPKP. A DNA-binding region (homeobox; WUS-type) is located at residues 68 to 132; it reads EPKPRWNPRP…NRKSRTKNKL (65 aa). The segment covering 130–143 has biased composition (basic residues); the sequence is NKLRAAGHHHHHGR. 2 stretches are compositionally biased toward low complexity: residues 144–156 and 177–195; these read AAALPRASAPPST and LAATSSSSSSSDRSSGSSK.

This sequence belongs to the WUS homeobox family.

The protein resides in the nucleus. In terms of biological role, transcription factor which may be involved in developmental processes. This Oryza sativa subsp. japonica (Rice) protein is WUSCHEL-related homeobox 12 (WOX12).